A 78-amino-acid chain; its full sequence is LYR motif-containing protein 9 (78 aa).

This sequence belongs to the complex I LYR family. LYRM9 subfamily.

This Danio rerio (Zebrafish) protein is LYR motif-containing protein 9 (lyrm9).